Here is a 227-residue protein sequence, read N- to C-terminus: Small ribosomal subunit protein uS3 (227 aa).

Residues 39 to 107 (VREFLMKKLE…PVHINIEEIR (69 aa)) form the KH type-2 domain.

This sequence belongs to the universal ribosomal protein uS3 family. As to quaternary structure, part of the 30S ribosomal subunit. Forms a tight complex with proteins S10 and S14.

Functionally, binds the lower part of the 30S subunit head. Binds mRNA in the 70S ribosome, positioning it for translation. In Hahella chejuensis (strain KCTC 2396), this protein is Small ribosomal subunit protein uS3.